The sequence spans 159 residues: Phosphopantetheine adenylyltransferase (159 aa).

T10 is a binding site for substrate. ATP is bound by residues 10–11 (TF) and H18. Residues K42, M74, and R88 each contribute to the substrate site. Residues 89-91 (GLR), E99, and 124-130 (WSFISSS) each bind ATP.

It belongs to the bacterial CoaD family. As to quaternary structure, homohexamer. Mg(2+) is required as a cofactor.

The protein localises to the cytoplasm. The catalysed reaction is (R)-4'-phosphopantetheine + ATP + H(+) = 3'-dephospho-CoA + diphosphate. It participates in cofactor biosynthesis; coenzyme A biosynthesis; CoA from (R)-pantothenate: step 4/5. In terms of biological role, reversibly transfers an adenylyl group from ATP to 4'-phosphopantetheine, yielding dephospho-CoA (dPCoA) and pyrophosphate. The chain is Phosphopantetheine adenylyltransferase from Cronobacter sakazakii (strain ATCC BAA-894) (Enterobacter sakazakii).